The sequence spans 37 residues: Cytochrome b6-f complex subunit 5 (37 aa).

A helical membrane pass occupies residues 5–25 (FLFGIVLGLIPVTLAGLFVTA).

This sequence belongs to the PetG family. In terms of assembly, the 4 large subunits of the cytochrome b6-f complex are cytochrome b6, subunit IV (17 kDa polypeptide, PetD), cytochrome f and the Rieske protein, while the 4 small subunits are PetG, PetL, PetM and PetN. The complex functions as a dimer.

The protein localises to the plastid. It is found in the chloroplast thylakoid membrane. Component of the cytochrome b6-f complex, which mediates electron transfer between photosystem II (PSII) and photosystem I (PSI), cyclic electron flow around PSI, and state transitions. PetG is required for either the stability or assembly of the cytochrome b6-f complex. This is Cytochrome b6-f complex subunit 5 from Daucus carota (Wild carrot).